The chain runs to 463 residues: Phosphoglucosamine mutase (463 aa).

The active-site Phosphoserine intermediate is the Ser110. Ser110, Asp255, Asp257, and Asp259 together coordinate Mg(2+). Position 110 is a phosphoserine (Ser110).

The protein belongs to the phosphohexose mutase family. The cofactor is Mg(2+). Activated by phosphorylation.

The catalysed reaction is alpha-D-glucosamine 1-phosphate = D-glucosamine 6-phosphate. Its function is as follows. Catalyzes the conversion of glucosamine-6-phosphate to glucosamine-1-phosphate. This Koribacter versatilis (strain Ellin345) protein is Phosphoglucosamine mutase.